We begin with the raw amino-acid sequence, 260 residues long: 3-alpha-(or 20-beta)-hydroxysteroid dehydrogenase (260 aa).

NAD(+) is bound by residues R17, M19, D38, D61, V62, N88, Y153, K157, V186, T188, and T191. The Proton acceptor role is filled by Y153.

It belongs to the short-chain dehydrogenases/reductases (SDR) family. In terms of assembly, homotetramer.

It carries out the reaction androstan-3alpha,17beta-diol + NAD(+) = 17beta-hydroxyandrostanone + NADH + H(+). The protein operates within lipid metabolism; steroid degradation. Functionally, probably involved in steroid metabolism. The polypeptide is 3-alpha-(or 20-beta)-hydroxysteroid dehydrogenase (fabG3) (Mycobacterium bovis (strain ATCC BAA-935 / AF2122/97)).